A 439-amino-acid polypeptide reads, in one-letter code: Microfibrillar-associated protein 1A (439 aa).

Residues 1–200 (MSVPSALMKQ…SEDEMEPRLK (200 aa)) are disordered. At serine 2 the chain carries N-acetylserine. Positions 23 to 34 (RNEKGEISMEKV) are enriched in basic and acidic residues. Phosphoserine is present on residues serine 52 and serine 53. A compositionally biased stretch (basic and acidic residues) spans 61–70 (QFIKKAKEQE). Lysine 67 participates in a covalent cross-link: Glycyl lysine isopeptide (Lys-Gly) (interchain with G-Cter in SUMO2). The segment covering 71 to 81 (AEPEEQEEDSS) has biased composition (acidic residues). Serine 94, serine 116, serine 118, serine 132, and serine 133 each carry phosphoserine. 2 stretches are compositionally biased toward acidic residues: residues 112–122 (VVGESDSEVEG) and 131–144 (DSSE…DDEE). The span at 145-163 (IERRRGMMRQRAQERKNEE) shows a compositional bias: basic and acidic residues. Over residues 178-195 (ESESESEYEEYTDSEDEM) the composition is skewed to acidic residues. Lysine 249 is covalently cross-linked (Glycyl lysine isopeptide (Lys-Gly) (interchain with G-Cter in SUMO2)). Position 267 is a phosphothreonine (threonine 267). Residue lysine 357 forms a Glycyl lysine isopeptide (Lys-Gly) (interchain with G-Cter in SUMO2) linkage. Serine 361 is subject to Phosphoserine. Glycyl lysine isopeptide (Lys-Gly) (interchain with G-Cter in SUMO2) cross-links involve residues lysine 371, lysine 381, lysine 415, and lysine 418. Serine 432 bears the Phosphoserine mark.

It belongs to the MFAP1 family. Component of the spliceosome B complex. Interacts with PRPF38A (via N-terminal interaction domain).

It is found in the nucleus. Its function is as follows. Involved in pre-mRNA splicing as a component of the spliceosome. The sequence is that of Microfibrillar-associated protein 1A from Mus musculus (Mouse).